The following is a 476-amino-acid chain: Glutamyl-tRNA(Gln) amidotransferase subunit A (476 aa).

Catalysis depends on charge relay system residues K70 and S145. S169 (acyl-ester intermediate) is an active-site residue.

The protein belongs to the amidase family. GatA subfamily. Heterotrimer of A, B and C subunits.

The catalysed reaction is L-glutamyl-tRNA(Gln) + L-glutamine + ATP + H2O = L-glutaminyl-tRNA(Gln) + L-glutamate + ADP + phosphate + H(+). In terms of biological role, allows the formation of correctly charged Gln-tRNA(Gln) through the transamidation of misacylated Glu-tRNA(Gln) in organisms which lack glutaminyl-tRNA synthetase. The reaction takes place in the presence of glutamine and ATP through an activated gamma-phospho-Glu-tRNA(Gln). This chain is Glutamyl-tRNA(Gln) amidotransferase subunit A, found in Methanosarcina mazei (strain ATCC BAA-159 / DSM 3647 / Goe1 / Go1 / JCM 11833 / OCM 88) (Methanosarcina frisia).